Reading from the N-terminus, the 702-residue chain is Dynein axonemal intermediate chain 1 (702 aa).

Residues 1 to 58 are disordered; sequence MLPASSKMPHKQPPPPRKQSISMGRGARKRDEDSGTEVGEGTDEWVQSKATVKPPDQL. A phosphoserine mark is found at S134 and S137. WD repeat units lie at residues 383–423, 432–475, 540–580, 582–622, and 630–669; these read SSES…SQPS, KHTD…LVHT, AHNM…PMFI, DLNS…YEAI, and KKKN…RKMP.

This sequence belongs to the dynein intermediate chain family. In terms of assembly, consists of at least two heavy chains and a number of intermediate and light chains. Interacts with BICD2. Interacts with CFAP45 and CFAP52. Interacts with CFAP53.

The protein localises to the cytoplasm. The protein resides in the cytoskeleton. Its subcellular location is the cilium axoneme. Part of the dynein complex of respiratory cilia. This chain is Dynein axonemal intermediate chain 1 (DNAI1), found in Bos taurus (Bovine).